A 386-amino-acid polypeptide reads, in one-letter code: Succinate--CoA ligase [ADP-forming] subunit beta (386 aa).

Residues 9–244 (KELLKQFGVP…LDEEDPAEIE (236 aa)) enclose the ATP-grasp domain. ATP contacts are provided by residues lysine 46, 53-55 (GRG), glutamate 99, alanine 102, and glutamate 107. Residues asparagine 199 and aspartate 213 each contribute to the Mg(2+) site. Substrate is bound by residues asparagine 264 and 321 to 323 (GIM).

It belongs to the succinate/malate CoA ligase beta subunit family. As to quaternary structure, heterotetramer of two alpha and two beta subunits. The cofactor is Mg(2+).

The catalysed reaction is succinate + ATP + CoA = succinyl-CoA + ADP + phosphate. The enzyme catalyses GTP + succinate + CoA = succinyl-CoA + GDP + phosphate. It participates in carbohydrate metabolism; tricarboxylic acid cycle; succinate from succinyl-CoA (ligase route): step 1/1. Functionally, succinyl-CoA synthetase functions in the citric acid cycle (TCA), coupling the hydrolysis of succinyl-CoA to the synthesis of either ATP or GTP and thus represents the only step of substrate-level phosphorylation in the TCA. The beta subunit provides nucleotide specificity of the enzyme and binds the substrate succinate, while the binding sites for coenzyme A and phosphate are found in the alpha subunit. This is Succinate--CoA ligase [ADP-forming] subunit beta from Bordetella avium (strain 197N).